A 528-amino-acid chain; its full sequence is 2-isopropylmalate synthase (528 aa).

In terms of domain architecture, Pyruvate carboxyltransferase spans 12–279 (IRIFDTTLRD…DSSINTPRIV (268 aa)). The Mn(2+) site is built by aspartate 21, histidine 214, histidine 216, and asparagine 250. Residues 401–528 (RLASMTISDV…STDVPTPATA (128 aa)) are regulatory domain.

This sequence belongs to the alpha-IPM synthase/homocitrate synthase family. LeuA type 1 subfamily. As to quaternary structure, homodimer. Mn(2+) is required as a cofactor.

The protein resides in the cytoplasm. It carries out the reaction 3-methyl-2-oxobutanoate + acetyl-CoA + H2O = (2S)-2-isopropylmalate + CoA + H(+). Its pathway is amino-acid biosynthesis; L-leucine biosynthesis; L-leucine from 3-methyl-2-oxobutanoate: step 1/4. In terms of biological role, catalyzes the condensation of the acetyl group of acetyl-CoA with 3-methyl-2-oxobutanoate (2-ketoisovalerate) to form 3-carboxy-3-hydroxy-4-methylpentanoate (2-isopropylmalate). This chain is 2-isopropylmalate synthase, found in Stenotrophomonas maltophilia (strain K279a).